The primary structure comprises 203 residues: Outer-membrane lipoprotein LolB (203 aa).

Positions 1 to 21 are cleaved as a signal peptide; it reads MRLSASLFHIALVTVLLVLAG. Cysteine 22 carries the N-palmitoyl cysteine lipid modification. Cysteine 22 is lipidated: S-diacylglycerol cysteine.

The protein belongs to the LolB family. Monomer.

It is found in the cell outer membrane. In terms of biological role, plays a critical role in the incorporation of lipoproteins in the outer membrane after they are released by the LolA protein. This is Outer-membrane lipoprotein LolB from Shewanella frigidimarina (strain NCIMB 400).